Reading from the N-terminus, the 695-residue chain is Follicle-stimulating hormone receptor (695 aa).

The first 17 residues, Met1–Gly17, serve as a signal peptide directing secretion. Cystine bridges form between Cys18/Cys25 and Cys23/Cys32. In terms of domain architecture, LRRNT spans Cys18–Arg46. Residues Cys18–Arg366 are Extracellular-facing. LRR repeat units lie at residues Val49–Leu72, Glu73–Leu97, His98–Asn118, Leu119–Ser143, Leu144–Ser169, Ser170–Gly192, Thr193–Gly216, Ala217–Asn240, and Leu241–Glu259. 2 N-linked (GlcNAc...) asparagine glycosylation sites follow: Asn191 and Asn199. 4 disulfides stabilise this stretch: Cys275–Cys346, Cys276–Cys292, Cys276–Cys356, and Cys292–Cys338. The N-linked (GlcNAc...) asparagine glycan is linked to Asn293. Tyr335 is modified (sulfotyrosine). Residues Val367–Leu387 form a helical membrane-spanning segment. Over Thr388–Arg398 the chain is Cytoplasmic. The helical transmembrane segment at Phe399–Val421 threads the bilayer. Over Asp422–Ala443 the chain is Extracellular. An intrachain disulfide couples Cys442 to Cys517. Residues Asp444 to Leu465 traverse the membrane as a helical segment. Topologically, residues Glu466–His485 are cytoplasmic. A helical transmembrane segment spans residues Ala486–Val508. At Ser509–Gln528 the chain is on the extracellular side. A helical membrane pass occupies residues Leu529 to Leu550. The Cytoplasmic portion of the chain corresponds to His551–Arg573. A helical transmembrane segment spans residues Met574 to Leu597. Residues Lys598–Lys608 lie on the Extracellular side of the membrane. A helical membrane pass occupies residues Ile609 to Thr630. The Cytoplasmic portion of the chain corresponds to Lys631–Asn695. The disordered stretch occupies residues Thr658–Arg677.

The protein belongs to the G-protein coupled receptor 1 family. FSH/LSH/TSH subfamily. In terms of assembly, homotrimer. Functions as a homotrimer binding the FSH hormone heterodimer composed of CGA and FSHB. Interacts with ARRB2. Interacts with APPL2; interaction is independent of follicle stimulating hormone stimulation. In terms of processing, N-glycosylated; indirectly required for FSH-binding, possibly via a conformational change that allows high affinity binding of hormone. Post-translationally, sulfated.

Its subcellular location is the cell membrane. Functionally, g protein-coupled receptor for follitropin, the follicle-stimulating hormone. Through cAMP production activates the downstream PI3K-AKT and ERK1/ERK2 signaling pathways. This Cavia porcellus (Guinea pig) protein is Follicle-stimulating hormone receptor (FSHR).